The sequence spans 21 residues: Protein YnfR (21 aa).

In Escherichia coli (strain K12), this protein is Protein YnfR.